Reading from the N-terminus, the 526-residue chain is Peptide chain release factor 3 (526 aa).

Residues 9-277 (ERRRTFAIIS…AFAEYAPPPQ (269 aa)) form the tr-type G domain. GTP contacts are provided by residues 18-25 (SHPDAGKT), 86-90 (DTPGH), and 140-143 (NKLD).

The protein belongs to the TRAFAC class translation factor GTPase superfamily. Classic translation factor GTPase family. PrfC subfamily.

It localises to the cytoplasm. In terms of biological role, increases the formation of ribosomal termination complexes and stimulates activities of RF-1 and RF-2. It binds guanine nucleotides and has strong preference for UGA stop codons. It may interact directly with the ribosome. The stimulation of RF-1 and RF-2 is significantly reduced by GTP and GDP, but not by GMP. The protein is Peptide chain release factor 3 of Methylococcus capsulatus (strain ATCC 33009 / NCIMB 11132 / Bath).